The following is a 268-amino-acid chain: Undecaprenyl-diphosphatase (268 aa).

7 consecutive transmembrane segments (helical) span residues 47–67 (FAVLIQLGAILAILALYFSKL), 85–105 (IGVLVAFLPAAVIGAASGGLI), 109–129 (LFNPWVVCFTLILGGGILLWV), 144–164 (FPLPMYLIIGFAQCIAMFPGV), 184–204 (AAEFSFFLAIPTMLGAFVYDL), 217–237 (LIVAVGFAVSFITAIIVVKTF), and 246–266 (FALFAWWRVIVGTLGLIALAL).

The protein belongs to the UppP family.

It localises to the cell inner membrane. It carries out the reaction di-trans,octa-cis-undecaprenyl diphosphate + H2O = di-trans,octa-cis-undecaprenyl phosphate + phosphate + H(+). In terms of biological role, catalyzes the dephosphorylation of undecaprenyl diphosphate (UPP). Confers resistance to bacitracin. This Rhodopseudomonas palustris (strain BisA53) protein is Undecaprenyl-diphosphatase.